The following is a 361-amino-acid chain: Biotin synthase (361 aa).

In terms of domain architecture, Radical SAM core spans Asn-63–Arg-290. Positions 78, 82, and 85 each coordinate [4Fe-4S] cluster. The [2Fe-2S] cluster site is built by Cys-122, Cys-153, Cys-213, and Arg-285.

This sequence belongs to the radical SAM superfamily. Biotin synthase family. Homodimer. [4Fe-4S] cluster is required as a cofactor. Requires [2Fe-2S] cluster as cofactor.

The enzyme catalyses (4R,5S)-dethiobiotin + (sulfur carrier)-SH + 2 reduced [2Fe-2S]-[ferredoxin] + 2 S-adenosyl-L-methionine = (sulfur carrier)-H + biotin + 2 5'-deoxyadenosine + 2 L-methionine + 2 oxidized [2Fe-2S]-[ferredoxin]. It functions in the pathway cofactor biosynthesis; biotin biosynthesis; biotin from 7,8-diaminononanoate: step 2/2. Its function is as follows. Catalyzes the conversion of dethiobiotin (DTB) to biotin by the insertion of a sulfur atom into dethiobiotin via a radical-based mechanism. This chain is Biotin synthase, found in Paraburkholderia phytofirmans (strain DSM 17436 / LMG 22146 / PsJN) (Burkholderia phytofirmans).